Here is a 152-residue protein sequence, read N- to C-terminus: 6,7-dimethyl-8-ribityllumazine synthase (152 aa).

5-amino-6-(D-ribitylamino)uracil contacts are provided by residues F21, 55–57 (AFE), and 79–81 (CVI). 84 to 85 (AT) is a (2S)-2-hydroxy-3-oxobutyl phosphate binding site. Residue H87 is the Proton donor of the active site. Residue F112 participates in 5-amino-6-(D-ribitylamino)uracil binding. Position 126 (R126) interacts with (2S)-2-hydroxy-3-oxobutyl phosphate.

The protein belongs to the DMRL synthase family. As to quaternary structure, forms an icosahedral capsid composed of 60 subunits, arranged as a dodecamer of pentamers.

The catalysed reaction is (2S)-2-hydroxy-3-oxobutyl phosphate + 5-amino-6-(D-ribitylamino)uracil = 6,7-dimethyl-8-(1-D-ribityl)lumazine + phosphate + 2 H2O + H(+). The protein operates within cofactor biosynthesis; riboflavin biosynthesis; riboflavin from 2-hydroxy-3-oxobutyl phosphate and 5-amino-6-(D-ribitylamino)uracil: step 1/2. Functionally, catalyzes the formation of 6,7-dimethyl-8-ribityllumazine by condensation of 5-amino-6-(D-ribitylamino)uracil with 3,4-dihydroxy-2-butanone 4-phosphate. This is the penultimate step in the biosynthesis of riboflavin. The protein is 6,7-dimethyl-8-ribityllumazine synthase of Staphylococcus carnosus (strain TM300).